A 102-amino-acid polypeptide reads, in one-letter code: Large ribosomal subunit protein bL21 (102 aa).

This sequence belongs to the bacterial ribosomal protein bL21 family. Part of the 50S ribosomal subunit. Contacts protein L20.

In terms of biological role, this protein binds to 23S rRNA in the presence of protein L20. The sequence is that of Large ribosomal subunit protein bL21 from Sorangium cellulosum (strain So ce56) (Polyangium cellulosum (strain So ce56)).